Consider the following 251-residue polypeptide: Probable transcriptional regulatory protein CT1665 (251 aa).

It belongs to the TACO1 family.

Its subcellular location is the cytoplasm. This chain is Probable transcriptional regulatory protein CT1665, found in Chlorobaculum tepidum (strain ATCC 49652 / DSM 12025 / NBRC 103806 / TLS) (Chlorobium tepidum).